Consider the following 433-residue polypeptide: 3-phosphoshikimate 1-carboxyvinyltransferase (433 aa).

3-phosphoshikimate is bound by residues K22, S23, and R27. K22 provides a ligand contact to phosphoenolpyruvate. G95 and R123 together coordinate phosphoenolpyruvate. 4 residues coordinate 3-phosphoshikimate: S167, Q169, D315, and K342. Q169 contributes to the phosphoenolpyruvate binding site. The active-site Proton acceptor is D315. Residues R346 and R387 each contribute to the phosphoenolpyruvate site.

It belongs to the EPSP synthase family. In terms of assembly, monomer.

It localises to the cytoplasm. It catalyses the reaction 3-phosphoshikimate + phosphoenolpyruvate = 5-O-(1-carboxyvinyl)-3-phosphoshikimate + phosphate. The protein operates within metabolic intermediate biosynthesis; chorismate biosynthesis; chorismate from D-erythrose 4-phosphate and phosphoenolpyruvate: step 6/7. Its function is as follows. Catalyzes the transfer of the enolpyruvyl moiety of phosphoenolpyruvate (PEP) to the 5-hydroxyl of shikimate-3-phosphate (S3P) to produce enolpyruvyl shikimate-3-phosphate and inorganic phosphate. The sequence is that of 3-phosphoshikimate 1-carboxyvinyltransferase from Legionella pneumophila (strain Paris).